Here is a 184-residue protein sequence, read N- to C-terminus: Ribosome maturation factor RimM (184 aa).

One can recognise a PRC barrel domain in the interval 112 to 184; that stretch reads TDSYYWIDLI…SNKTISLDWQ (73 aa).

It belongs to the RimM family. In terms of assembly, binds ribosomal protein uS19.

The protein localises to the cytoplasm. An accessory protein needed during the final step in the assembly of 30S ribosomal subunit, possibly for assembly of the head region. Essential for efficient processing of 16S rRNA. May be needed both before and after RbfA during the maturation of 16S rRNA. It has affinity for free ribosomal 30S subunits but not for 70S ribosomes. The chain is Ribosome maturation factor RimM from Polynucleobacter necessarius subsp. necessarius (strain STIR1).